Consider the following 548-residue polypeptide: MLTRIHGGRVVDPTAGRDAVGDVWIEDGRVVAPSERAPDQTIDATGCVVMAGGVEVHSHIAGGNVVMSRLLLPDLYVSESAPNGHPFAHAGGSGSWIGANYARMGYTTAVEPALPPSNALATHLELADIPLLDRGGLAVLGNDDHLLQLLRDGEGKQAVRDLVQQTLAHSRGLGVKCINAGGASAFKDGVLKLSLDDEIPCYGLSTRKIMSALLDAVEEIGVPHPLHVHCNNLGLPGADDSLVATLEAAEGRRIHFAHAQFYAYGVVDPENPMTGGFRSAAERINAAMEAHPNATYDVGQVVFGQTVTISLDILRQFGGRKGAKPKKWVISAGDAEGGGVVPFLYRPRGPVSSLQWAIGLELMLLSSNPERTILTTDHPNGGVFTEYPRIIHLLMDAEERAKEIATLPAIVGERSGLPKIEREYSFSEIAQLTRSGPAKLLGLTDRGHLREGAKADVAIYRDDKDRTAMFSRAKLVLKDGQPIVEDGEVVAWFSGKTLSLDVEADAGMEKRAESYLQDRFGAGLDTFAVPDAAFPENTGTFEDVACRA.

Zn(2+) is bound by residues H57, H59, and H227.

Belongs to the metallo-dependent hydrolases superfamily. FwdA/FmdA family. In terms of assembly, octaheteromer. Part of the formyltransferase/hydrolase complex fhc; composed of FhcA, FhcB, FhcC and FhcD. Zn(2+) is required as a cofactor.

It is found in the cytoplasm. The catalysed reaction is N-formylmethanofuran + H2O = methanofuran + formate. It participates in one-carbon metabolism; formaldehyde degradation; formate from formaldehyde (H(4)MPT route): step 4/5. Its function is as follows. Involved in the transformation of 5-formyl tetrahydromethanopterin (5-formyl-H(4)MPT) to methanofuran (MFR) and formate via the formylmethanofuran (formyl-MFR). May be catalyze the hydrolysis of formylmethanofuran (formyl-MFR) to yield formate and MFR. The sequence is that of Formyltransferase/hydrolase complex Fhc subunit A (fhcA) from Methylorubrum extorquens (strain ATCC 14718 / DSM 1338 / JCM 2805 / NCIMB 9133 / AM1) (Methylobacterium extorquens).